Reading from the N-terminus, the 22-residue chain is Plasticin-TR (22 aa).

Belongs to the frog skin active peptide (FSAP) family. Plasticin subfamily. Exhibits a propensity to self-association and forms helical oligomers in membrane-mimetic environments. As to expression, expressed by the skin glands.

The protein localises to the secreted. The protein resides in the target cell membrane. Its function is as follows. Has no antimicrobial activity against Gram-negative bacterium E.coli ATCC 25922, Gram-positive bacterium S.epidermidis ATCC 12228 and against fungus C.albicans ATCC 24433 at concentrations up to 100 uM. Has an anti-inflammatory effect, since it inhibits the production of the pro-inflammatory cytokines TNF-alpha and IL-1 beta. Has high activity of stimulation of insulin release, which may protect the species from being eaten by predators by causing fatal hypoglycemia. Is not cytotoxic to cancer line cells. Does not show hemolysis on mouse erythrocytes. Adopts a mixture of alpha-helical and beta-sheet structures. This is Plasticin-TR from Phyllomedusa trinitatis (Trinidad leaf frog).